A 930-amino-acid chain; its full sequence is Urea transporter 2 (930 aa).

The segment covering 1–11 (MSDHHPLKEMS) has biased composition (basic and acidic residues). Residues 1-90 (MSDHHPLKEM…KRRESEVSRR (90 aa)) form a disordered region. 2 stretches are compositionally biased toward low complexity: residues 12 to 25 (DSNS…PLSS) and 32 to 43 (SELSSPTWPSSS). The span at 56–89 (PEEKDLRSSDEDSHIVKIEKPNERNKRRESEVSR) shows a compositional bias: basic and acidic residues. A run of 8 helical transmembrane segments spans residues 145 to 165 (ISGL…TIAG), 185 to 205 (AIAS…MAVF), 213 to 233 (WWLL…SSAL), 242 to 262 (LPVF…ATGH), 280 to 300 (NITW…VGVG), 311 to 331 (GGVI…HAAI), 350 to 372 (IYLG…MFYA), and 401 to 421 (VVGV…FLLL). Residues 452–479 (SEEEKSPNGGSGEQSHGSGQWKAEESSE) are disordered. S487 bears the Phosphoserine mark. The next 4 membrane-spanning stretches (helical) occupy residues 610-630 (GILI…SGCL), 648-668 (AIAA…MAVF), 676-696 (WWLL…SSAL), and 705-725 (LPVF…ATGH). The N-linked (GlcNAc...) asparagine glycan is linked to N743. Helical transmembrane passes span 774–794 (GGIF…HAAI), 813–833 (IYFG…GGMF), 842–862 (LLAI…ANML), and 864–884 (VFGL…FLLL).

This sequence belongs to the urea transporter family. In terms of tissue distribution, highly expressed in kidney medulla (at protein level). Also detected in testes, heart, brain and liver (at protein level). In the kidney, present in thin descending limbs of the loop of Henle and in the middle and terminal inner medullary collecting ducts. Expressed in the kidney medulla. As to expression, expressed in the peritubular myoid cells forming the outermost layer of the seminiferous tubules within the testes and is not detected in kidney. Expression levels are coordinated with the stage of testes development and increase 15 days postpartum, commensurate with the start of seminiferous tubule fluid movement.

It is found in the apical cell membrane. It localises to the basolateral cell membrane. It catalyses the reaction urea(in) = urea(out). With respect to regulation, inhibited by phloretin. Activated by forskolin, 3-isobutyl-1-methylxanthine (IBMX) and cAMP. Inhibited by phloretin. Its activity is regulated as follows. Inhibited by phloretin. Activated by forskolin, 3-isobutyl-1-methylxanthine (IBMX) and cAMP. Functionally, mediates the transport of urea driven by a concentration gradient across the cell membrane of the renal inner medullary collecting duct which is critical to the urinary concentrating mechanism. In terms of biological role, mediates the transport of urea driven by a concentration gradient across the cell membrane. Implicated in the urea movement across the blood-testis barrier and does not translocate water. The polypeptide is Urea transporter 2 (Slc14a2) (Mus musculus (Mouse)).